The chain runs to 371 residues: tRNA-specific 2-thiouridylase MnmA (371 aa).

Residues 13-20 (GMSGGVDS) and M39 contribute to the ATP site. Positions 99 to 101 (NPD) are interaction with target base in tRNA. C104 functions as the Nucleophile in the catalytic mechanism. C104 and C200 are oxidised to a cystine. G128 lines the ATP pocket. An interaction with tRNA region spans residues 150-152 (KDQ). C200 serves as the catalytic Cysteine persulfide intermediate. The interval 308–309 (RY) is interaction with tRNA.

Belongs to the MnmA/TRMU family.

The protein localises to the cytoplasm. It catalyses the reaction S-sulfanyl-L-cysteinyl-[protein] + uridine(34) in tRNA + AH2 + ATP = 2-thiouridine(34) in tRNA + L-cysteinyl-[protein] + A + AMP + diphosphate + H(+). Catalyzes the 2-thiolation of uridine at the wobble position (U34) of tRNA, leading to the formation of s(2)U34. The polypeptide is tRNA-specific 2-thiouridylase MnmA (Geobacillus thermodenitrificans (strain NG80-2)).